A 234-amino-acid chain; its full sequence is Sugar fermentation stimulation protein A (234 aa).

Residues 201 to 220 (LLSEAQQRGVEILAYKAEIS) constitute a DNA-binding region (H-T-H motif).

Belongs to the SfsA family.

In terms of biological role, binds to DNA non-specifically. Could be a regulatory factor involved in maltose metabolism. The sequence is that of Sugar fermentation stimulation protein A from Shigella boydii serotype 4 (strain Sb227).